Consider the following 108-residue polypeptide: Phosphoribosyl-AMP cyclohydrolase (108 aa).

Residue Asp-72 participates in Mg(2+) binding. Cys-73 is a binding site for Zn(2+). Mg(2+) is bound by residues Asp-74 and Asp-76. Zn(2+) contacts are provided by Cys-89 and Cys-96.

The protein belongs to the PRA-CH family. As to quaternary structure, homodimer. Mg(2+) serves as cofactor. It depends on Zn(2+) as a cofactor.

It localises to the cytoplasm. It catalyses the reaction 1-(5-phospho-beta-D-ribosyl)-5'-AMP + H2O = 1-(5-phospho-beta-D-ribosyl)-5-[(5-phospho-beta-D-ribosylamino)methylideneamino]imidazole-4-carboxamide. It participates in amino-acid biosynthesis; L-histidine biosynthesis; L-histidine from 5-phospho-alpha-D-ribose 1-diphosphate: step 3/9. Catalyzes the hydrolysis of the adenine ring of phosphoribosyl-AMP. This Archaeoglobus fulgidus (strain ATCC 49558 / DSM 4304 / JCM 9628 / NBRC 100126 / VC-16) protein is Phosphoribosyl-AMP cyclohydrolase.